Here is a 281-residue protein sequence, read N- to C-terminus: Probable short-chain type dehydrogenase/reductase blr2146 (281 aa).

Residue 10 to 34 (VVTGAGAGIGKACALAIAREGGRVV) coordinates NAD(+). Residue serine 146 participates in substrate binding. Tyrosine 159 (proton acceptor) is an active-site residue. The disordered stretch occupies residues 261 to 281 (GNSRAARPAGETAEADAAPRC).

It belongs to the short-chain dehydrogenases/reductases (SDR) family.

This Bradyrhizobium diazoefficiens (strain JCM 10833 / BCRC 13528 / IAM 13628 / NBRC 14792 / USDA 110) protein is Probable short-chain type dehydrogenase/reductase blr2146.